The following is a 188-amino-acid chain: MGLKADSWIKKMSLEHGMISPFCEKQVGKNVISYGLSSYGYDIRVGSEFMLFDNKNALIDPKNFDPNNATKIDASKEGFFILPANAFALAHTIEYFKMPKDTLAICLGKSTYARCGIIVNVTPFEPEFEGYITIEISNTTNLPAKVYANEGIAQVVFLQGDEMCEQSYKDRGGKYQGQVGITLPKILK.

109–114 lines the dCTP pocket; the sequence is KSTYAR. Glutamate 135 serves as the catalytic Proton donor/acceptor. 3 residues coordinate dCTP: glutamine 154, tyrosine 168, and glutamine 178.

It belongs to the dCTP deaminase family. As to quaternary structure, homotrimer.

It carries out the reaction dCTP + H2O + H(+) = dUTP + NH4(+). The protein operates within pyrimidine metabolism; dUMP biosynthesis; dUMP from dCTP (dUTP route): step 1/2. Its function is as follows. Catalyzes the deamination of dCTP to dUTP. The polypeptide is dCTP deaminase (Helicobacter pylori (strain G27)).